Here is a 146-residue protein sequence, read N- to C-terminus: Hemoglobin subunit beta (146 aa).

One can recognise a Globin domain in the interval 2–146 (QWSDSERTII…VVMFLGKQYH (145 aa)). Heme b is bound by residues H63 and H92.

Belongs to the globin family. In terms of assembly, heterotetramer of two alpha chains and two beta chains. As to expression, red blood cells.

Involved in oxygen transport from the lung to the various peripheral tissues. This Artedidraco orianae (Barbeled plunderfish) protein is Hemoglobin subunit beta (hbb).